A 525-amino-acid polypeptide reads, in one-letter code: G patch domain-containing protein 3 (525 aa).

The segment at 264–316 (YLADIPASPCGEPEEEVGKEEEEESHSDEDDDRGEEWERHEALHEDVTGQERT) is disordered. Acidic residues predominate over residues 275–298 (EPEEEVGKEEEEESHSDEDDDRGE). Over residues 299–316 (EWERHEALHEDVTGQERT) the composition is skewed to basic and acidic residues. The 49-residue stretch at 410 to 458 (TKGIGRKVMERQGWAEGQGLGCRCSGVPEALDSDGQHPRCKRGLGYHGE) folds into the G-patch domain.

As to quaternary structure, interacts with mitochondrial MAVS; the interaction is markedly increased upon viral infection. Expressed in ocular tissues including retinal pigment epithelium, cornea, ciliary muscle and non-pigmented ciliary epithelium. Also expressed in optic nerve, cartilage, skin and lymph node.

The protein localises to the nucleus. It is found in the cytoplasm. Its function is as follows. Involved in transcriptional regulation. It is able to activate transcription from the CXCR4 promoter and therefore it might control neural crest cell migration involved in ocular and craniofacial development. Is a negative regulator of immune antiviral response, acting via down-regulation of RIG-I-like receptors signaling and inhibition of type I interferon production. The control mechanism involves interaction with mitochondrial MAVS and inhibition of MAVS assembly with downstream proteins implicated in antiviral response, such as TBK1 and TRAF6. This chain is G patch domain-containing protein 3 (GPATCH3), found in Homo sapiens (Human).